The sequence spans 4241 residues: MVSKILPGLLKKILGNYIEGLDTLSIPWWKGQIVLENLKFKKELFSSNELPFDLLSGVVKRVVITIPILHFLKDPIVVNIDGVFLLFGPKDIINTFSNYGNDKSNKKDIVIDDNDGGISIDSNSNNNNKKNAPSSSSSNDDFFKKPNLTKEELKKIQIQIDKEQSKESNDGYSADSESFKFRMIKKLLKCIRIQLNNLHICYQDDSTSPGEIFSVGITMESFTFQTTDSQWVPLSKNTSTHQQQQPTFNPYVGSQQQQQQQPQQNTEINYENDSEHNPFMNNKNSDEGISSSSSSSSFNNNNLNIPTLNLNDNYMDSEAYTTNTQPTPKSEQYQQQQQQQQPLGQIVDQIITYKLASIFNFSIYWDSQFGKTRMVTPEDMDVLLMHSIPRQKAKINHKYILQPISGFLKICLTEDSIESVNKEGVFNSIANNFNVSIGLKQIDLQLMDIQYRDMLNLLSFYQDWRRVLRYHKFRPHCRVKGNARIWWHFAFRSIISDFRSKKTEMTWKEIEDSKRVRECYIKLYTEKFIKGKLGRLDQNLIDEIEKKVTYEDIVLFRTIAEKDLKVTKRKDLDQFTESSGWWLGGWLGFQHHHQNNNQDKITLTNEQLTFLERYLKVNLKVLAGKPHSSVSLIFFLNVKRLSISILDWQENHTVVPLANIDITEVNLQMEQSHNTKLKFSAESLDIFDRCSPNTKFENIILEKSRFNSSNINPDNSANSIGSFILDRQISNSEFLNGVYTGVNGTNNNNNKKFIDISIVLNPPEDTTDYFIYFKLEPFYFINSKPFVDTMIPFFTHANQEALDRLKYSFIKKIKILQEYLINELKHLVRNQKVADIKLDIAIPGLVFPESYDREDTMVLVCNMGNLILKTQPHNSEWDSMDFSEINEQDETDEIFVRYCNLLKDRVKWWSDNCPIKKINEPIEKQSYIINYVQQHRQTIENLGTGNGINNNNSGGGGNGGNASNSSEDDGKYPEQDDLDDSKVEKEGFDSCDTDWNKVSVNINNAQFYDGIVLTISDIYVKVCDCTQINNFNYLISPFSLDIFLELCSRPYDLKLPQIKCKAELSELNLQVSDKELYEIAKIVGKNGILEYFMDMDRKSSKELADMYEIVQVKKPKKKSFEVQFSLFSDTKSILNSRKRTKERLVKTTLLRFFFTSNAINMKLNYLDSCTLSLTMDQIRCRSLVKFMQMNIQFDISSIEIKDSNSITPVLSIFPYNLNNNNNNNNNNNNNNNNNNNNNNNRNLNNNNNNNNNNQKPECLNEFPISITAKSISKNSLDYDYIDFVLTLTTQYIRINFPKECVMALIAIIGTVVTNTTNFYETKKSILTVEGSFYQGRVGQFTQSNTTTTTSPRYHHQNHHNHQHKKQNRHRLSTRLETNEFDPNDLKSKITINIPSFGLTLSTIENDLVAFQFEDISIDGIFQLPLIDCELKVRDMKFIDYTGSDGPYPYMLITQKSQSPMVPVVRMHLVCHSNSKTQEWGFSRLINIAVGKIQITFLLQTINLIRLFIHDITSSLKEYCPFLFKVMAIVDDNNKPSSKDNNNNNNNNNNSDSDSDSDTDSSSSSENNYNNNIDLNSPVVEIVKKKKNLTNLEIEIDNNVVIVPKNSRSRSAIRFSVGRILLGLDQMDPTVDAVFVKIYGINMASKYEDSIDPIISDPIKMDIRFIHMFETSLKDKSIEVIIKIDKIHLKLSQYQYNLLYNTYQQNINQSIVPAPPSNSYSTVERQDILLDIRLEFKDFVELNLENEKTNDSRFFSMLIQRPIICCSVWNNGDSDFLIKTTGISVRDKNKLVVVPNGFQEMINITPYDLDVPIKNVINQSINEVFFDIVKMNIDDNGIDINITIEYLSIFFDLPWVSKLITFLSPIIDADYIGNSCSNSTNKSSTTINTQLLPPPPPPPPISLNKSGVNLTNQQQNEEFNSKFNKDWKIFLKVEVSAKNANIMVGDLNSKNELVLLMNSSLLINSQFGTEGLMKIILEYQCIKGLIGNKTKDPIYSTKNPSATTMSFISASSRDLGAQKNTTHYLWKELKKSSKLFLETFKTNIQVCLVPEGNQFYFCELNDLSLVFSGKAYKYLLDIYECVSDIIYGVSKSKDITNNNLVQKHSRSSSISTDLPIPINLRRSSIISTNLMQQQQQQQQQQQQQQQQQQQQQQQQQQNNNNNQNNQASSNNNNNNNNNVSGNTINNKSVPNVHDKTKNQFYQIKTRSVEMLRAHQTRVTEKYQASLPSNGKIAETEENENGDHTFTSDDDDDEGEDEDIGEGFSLDHSTSSAPTSRSNYNNINEPMIDLKSSKKQDDSNMVTKIQFSQISISIKNLNIIIMDDLSKHKMNTPIFNMKLNYGFMKAVLKTTRIEVEFDSVFQMNYFNNRIAYWEPFIEPWLFKSMMTLGKELSIDIYSTDLLNINFTIPLMDNISLFLRTYSKEFGYPFNLICAPSDSNNTDNSSNNGKKSHSNRHSLIGQIKKIKEKKTKTSYSPFFIRNRTGSRLRYRLETQDGKPVAGVNHKMEGSTVRVVNIENYGLFFELDSGDCSPIKFLPDVQINLETFSQLVLAVELLGVEKSISIPLDKIKIYDYQVYLDSSTSTKLYANIGIKNGTKLITIQFPIVLKNLTSFPIDIATVTSGFGDTQMPNYSTTIRVGQARAPLPINRMRNVQIKFKPSGDQYKWSTEALDVNNVIEGEDKFSCILKNGEKIYYIKGYIFKKNQCFIIKLCHMLKVKNLLPYPIQFKLKSPIENIPLLKRETQATVQDQEKTEVYEIPLLDKFKIQVRIADKDGTFEKSEWSEIRSIVEREDNNEIGVITISDSNNLIVDYLHLNVEFESYKGEKKIVFYNQYWIFNKSGLNLYCKKSYHSKDYSESQTHFNHPLQQLDSSNTNTTIKPSDAIIVTPDQWYSHQLIKESPLLFSFKKLKDMENSIRIRVGDSKWSHKISIAAIGDRGTIVIDSSEKRHSRSYHLGLSVDLAPNLKTKIVVFTPRFVFHNLFPYTILVQQCGANTDSTTIRIPPSCSVPFYYFINNTGESSKPTLKFKIDYQEFDWSPPFSIQTFSDFTFNVFNNNNNDNVENYKQPDIHCNPYIRIKTCLEVATILVIISELKEPPYRILNNTKYQLSIQQKKVGKVLTVEPSSSIPYVWDLPLEDHILEVLVHISTNQSEKASYKMDKIKTFRPMEFNDDHNPVVIKAIVEADESTRVLTLSDKTSFQISKYEEENLRQSFRIHFTGIGISVINANPTELLYVSIHDILCEYFISSFLQKLEMKITNIQVDNQLSKVTPYSHPVLLFADNLLPNTPFLQVRIVRSMKMKNIDYYHHVSLKMQELNIKVEEKFLYVLLDFFNSLDFSFWTGNKKTNTLHNMDMLTPMYNEDIGEGFIDEMVARALPSIYGKKMYFESLDIEPISMFLTFDLSNKSGSIASLEQAPMVKAFRRIGFVIVSFQHAHIFLHGFSLSHAFGSNEELLAPIFNHYFSEGLSEVYKILGAFNLFGNPVGLVTNFGIGFKEFFVSMGKGLVGNSFTDSFGQGSKSLAKHSVYGIFDSGAKLTGSAGKVLSTLSMDQRYILERQYIIGESPNTFMQGLILGGRAAKTAVYRGFSGFVKLPYEGGKEAGPKGVVKGIGKGTAGLVLKPIAAGFDFASKVSEGIKNSTQLSIERKRIRFPRPLFSDSPLETYDSAESYGHFLFLTYIITAGKLRRISADQINLPLMEVVSKDEKYVSHLIYKNRKTLLFTNKRIIYLYDTDGFRTKFDIKYTRIHGVSEKSDHIDIKIDKKHKLSFLYNEKNKKIDYRIKCVGEEKSYIFYRIIEMIKTYKPFADEELTVNGLKADPTTMIPIPPPPPPPLQQQLLYGSNIIQQQPPIQYFNDGSSSSSNLTGGRTIQPIIFTNDAGPMRNDLNPILENLLAQQPNKNMEIPIWISQGFNPPKPPDTLIPQRFRDPNLINNNNNYYYPNGSGYVYSQPPLYDQYGNQIPPPPPLPSHPLAIDRPTTTTTTNTTTTPYQSSQNIHSTPYPTETPQSVVLKEDISKAIHTPSASSLKKLKTPHHYNVRFEPSSSLGPQDFDIHTIRLQNQQYQHSGSGAPPPPPIITTTTNSTIPPPSSNINQRQLQHQFSSNSIIETPRYKSMARQQQFQQPPPPPPLPSNNRLSLTPSGSGNINYSDKFEVALNTIIQIQKIQSQQMSSLQKNQRDLQKLLFQQQSTEFDTLRNQQEQIQNIISQYHPLSPSKASLVSKLSNELESTNSNVVISPPTGGASN.

A Chorein N-terminal domain is found at 5–97 (ILPGLLKKIL…GPKDIINTFS (93 aa)). Low complexity predominate over residues 120 to 140 (IDSNSNNNNKKNAPSSSSSND). Disordered stretches follow at residues 120 to 143 (IDSN…DDFF), 234 to 340 (LSKN…QQQQ), 942 to 986 (LGTG…VEKE), 1220 to 1256 (NNNN…NQKP), 1345 to 1369 (TTTT…QNRH), 1534 to 1571 (KPSS…YNNN), 2148 to 2192 (QQQQ…PNVH), and 2217 to 2282 (VTEK…NNIN). Polar residues predominate over residues 234 to 254 (LSKNTSTHQQQQPTFNPYVGS). Residues 255–264 (QQQQQQQPQQ) show a composition bias toward low complexity. Positions 279 to 289 (FMNNKNSDEGI) are enriched in polar residues. Low complexity-rich tracts occupy residues 290-313 (SSSS…LNDN), 325-340 (QPTP…QQQQ), and 942-952 (LGTGNGINNNN). The span at 968–986 (DDGKYPEQDDLDDSKVEKE) shows a compositional bias: basic and acidic residues. Over residues 1220 to 1253 (NNNNNNNNNNNNNNNNNNNNNRNLNNNNNNNNNN) the composition is skewed to low complexity. The span at 1352 to 1369 (RYHHQNHHNHQHKKQNRH) shows a compositional bias: basic residues. Composition is skewed to low complexity over residues 1538-1551 (KDNN…NNSD), 1559-1571 (DSSS…YNNN), and 2148-2177 (QQQQ…NNNN). Over residues 2178–2188 (VSGNTINNKSV) the composition is skewed to polar residues. Positions 2246-2259 (SDDDDDEGEDEDIG) are enriched in acidic residues. Residues 2265–2282 (DHSTSSAPTSRSNYNNIN) show a composition bias toward polar residues. Residues 2825-3134 (KIVFYNQYWI…IPYVWDLPLE (310 aa)) enclose the SHR-BD domain. Disordered stretches follow at residues 3973-4000 (PTTT…YPTE), 4059-4094 (YQHS…RQLQ), and 4109-4140 (KSMA…SGSG). The segment covering 3974-3984 (TTTTTTNTTTT) has biased composition (low complexity). Residues 3985–4000 (PYQSSQNIHSTPYPTE) show a composition bias toward polar residues. The segment covering 4128–4140 (SNNRLSLTPSGSG) has biased composition (polar residues).

It belongs to the VPS13 family.

The protein localises to the membrane. Mediates the transfer of lipids between membranes at organelle contact sites. The chain is Intermembrane lipid transfer protein vps13E (vps13E) from Dictyostelium discoideum (Social amoeba).